A 412-amino-acid polypeptide reads, in one-letter code: Argininosuccinate synthase (412 aa).

Residues 10–18 (AYSGGLDTS) and alanine 36 each bind ATP. 2 residues coordinate L-citrulline: tyrosine 87 and serine 92. Residue tyrosine 87 is modified to Phosphotyrosine. Lysine 112 is subject to N6-acetyllysine. A Phosphotyrosine modification is found at tyrosine 113. 115–123 (SHGATGKGN) is a binding site for ATP. L-aspartate-binding residues include threonine 119, asparagine 123, and aspartate 124. L-citrulline is bound at residue asparagine 123. Residue arginine 127 coordinates L-citrulline. Lysine 165 and lysine 176 each carry N6-acetyllysine; by CLOCK. Residues serine 177 and serine 180 each carry the phosphoserine modification. Positions 180 and 189 each coordinate L-citrulline. Serine 219 carries the phosphoserine modification. L-citrulline contacts are provided by glutamate 270 and tyrosine 282.

The protein belongs to the argininosuccinate synthase family. Type 1 subfamily. In terms of assembly, homotetramer. Interacts with NMRAL1. Interacts with CLOCK; in a circadian manner. Forms tissue-specific complexes with ASL, SLC7A1, HSP90AA1 and nitric oxide synthase NOS1, NOS2 or NOS3; the complex regulates cell-autonomous L-arginine synthesis and citrulline recycling while channeling extracellular L-arginine to nitric oxide synthesis pathway. Post-translationally, acetylated by CLOCK in a circadian manner which negatively regulates its enzyme activity. Deacetylated by histone deacetylases. In terms of tissue distribution, widely expressed.

It is found in the cytoplasm. It localises to the cytosol. It carries out the reaction L-citrulline + L-aspartate + ATP = 2-(N(omega)-L-arginino)succinate + AMP + diphosphate + H(+). It functions in the pathway amino-acid biosynthesis; L-arginine biosynthesis; L-arginine from L-ornithine and carbamoyl phosphate: step 2/3. The protein operates within nitrogen metabolism; urea cycle; (N(omega)-L-arginino)succinate from L-aspartate and L-citrulline: step 1/1. Its function is as follows. One of the enzymes of the urea cycle, the metabolic pathway transforming neurotoxic amonia produced by protein catabolism into inocuous urea in the liver of ureotelic animals. Catalyzes the formation of arginosuccinate from aspartate, citrulline and ATP and together with ASL it is responsible for the biosynthesis of arginine in most body tissues. This chain is Argininosuccinate synthase, found in Mus musculus (Mouse).